Consider the following 288-residue polypeptide: Phosphatidylserine decarboxylase proenzyme (288 aa).

Residues aspartate 89, histidine 146, and serine 252 each act as charge relay system; for autoendoproteolytic cleavage activity in the active site. The active-site Schiff-base intermediate with substrate; via pyruvic acid; for decarboxylase activity is the serine 252. A Pyruvic acid (Ser); by autocatalysis modification is found at serine 252.

The protein belongs to the phosphatidylserine decarboxylase family. PSD-B subfamily. Prokaryotic type I sub-subfamily. In terms of assembly, heterodimer of a large membrane-associated beta subunit and a small pyruvoyl-containing alpha subunit. The cofactor is pyruvate. Post-translationally, is synthesized initially as an inactive proenzyme. Formation of the active enzyme involves a self-maturation process in which the active site pyruvoyl group is generated from an internal serine residue via an autocatalytic post-translational modification. Two non-identical subunits are generated from the proenzyme in this reaction, and the pyruvate is formed at the N-terminus of the alpha chain, which is derived from the carboxyl end of the proenzyme. The autoendoproteolytic cleavage occurs by a canonical serine protease mechanism, in which the side chain hydroxyl group of the serine supplies its oxygen atom to form the C-terminus of the beta chain, while the remainder of the serine residue undergoes an oxidative deamination to produce ammonia and the pyruvoyl prosthetic group on the alpha chain. During this reaction, the Ser that is part of the protease active site of the proenzyme becomes the pyruvoyl prosthetic group, which constitutes an essential element of the active site of the mature decarboxylase.

It is found in the cell membrane. The catalysed reaction is a 1,2-diacyl-sn-glycero-3-phospho-L-serine + H(+) = a 1,2-diacyl-sn-glycero-3-phosphoethanolamine + CO2. Its pathway is phospholipid metabolism; phosphatidylethanolamine biosynthesis; phosphatidylethanolamine from CDP-diacylglycerol: step 2/2. Functionally, catalyzes the formation of phosphatidylethanolamine (PtdEtn) from phosphatidylserine (PtdSer). This chain is Phosphatidylserine decarboxylase proenzyme, found in Shewanella frigidimarina (strain NCIMB 400).